A 202-amino-acid polypeptide reads, in one-letter code: Large ribosomal subunit protein bL25 (202 aa).

It belongs to the bacterial ribosomal protein bL25 family. CTC subfamily. As to quaternary structure, part of the 50S ribosomal subunit; part of the 5S rRNA/L5/L18/L25 subcomplex. Contacts the 5S rRNA. Binds to the 5S rRNA independently of L5 and L18.

In terms of biological role, this is one of the proteins that binds to the 5S RNA in the ribosome where it forms part of the central protuberance. This chain is Large ribosomal subunit protein bL25, found in Corynebacterium efficiens (strain DSM 44549 / YS-314 / AJ 12310 / JCM 11189 / NBRC 100395).